The following is a 451-amino-acid chain: D-inositol 3-phosphate glycosyltransferase (451 aa).

A 1D-myo-inositol 3-phosphate-binding site is contributed by H21. Residues 27–28 (QP) and G35 each bind UDP-N-acetyl-alpha-D-glucosamine. Residues 32 to 37 (DAGGMN), K90, Y123, T147, and R167 each bind 1D-myo-inositol 3-phosphate. Positions 241, 246, and 305 each coordinate UDP-N-acetyl-alpha-D-glucosamine. Residues Y314, R315, and A317 each coordinate Mg(2+). Positions 327 and 335 each coordinate UDP-N-acetyl-alpha-D-glucosamine. T341 provides a ligand contact to Mg(2+).

Belongs to the glycosyltransferase group 1 family. MshA subfamily. Homodimer.

The enzyme catalyses 1D-myo-inositol 3-phosphate + UDP-N-acetyl-alpha-D-glucosamine = 1D-myo-inositol 2-acetamido-2-deoxy-alpha-D-glucopyranoside 3-phosphate + UDP + H(+). Functionally, catalyzes the transfer of a N-acetyl-glucosamine moiety to 1D-myo-inositol 3-phosphate to produce 1D-myo-inositol 2-acetamido-2-deoxy-glucopyranoside 3-phosphate in the mycothiol biosynthesis pathway. This is D-inositol 3-phosphate glycosyltransferase from Nocardia farcinica (strain IFM 10152).